Consider the following 64-residue polypeptide: Alpha-toxin Ts5 (64 aa).

One can recognise an LCN-type CS-alpha/beta domain in the interval 2-64 (KDGYPVEGDN…KEPTKTSGRC (63 aa)). 4 disulfides stabilise this stretch: Cys12-Cys64, Cys16-Cys38, Cys24-Cys44, and Cys28-Cys46.

It belongs to the long (4 C-C) scorpion toxin superfamily. Sodium channel inhibitor family. Alpha subfamily. Expressed by the venom gland.

Its subcellular location is the secreted. In terms of biological role, alpha toxins bind voltage-independently at site-3 of sodium channels (Nav) and inhibit the inactivation of the activated channels, thereby blocking neuronal transmission. By extending the depolarized period it indirectly affects beta-cell voltage-dependent potassium channels, thus increasing potassium permeability. The polypeptide is Alpha-toxin Ts5 (Tityus serrulatus (Brazilian scorpion)).